A 310-amino-acid polypeptide reads, in one-letter code: Ribosomal RNA large subunit methyltransferase F (310 aa).

Belongs to the methyltransferase superfamily. METTL16/RlmF family.

The protein localises to the cytoplasm. It carries out the reaction adenosine(1618) in 23S rRNA + S-adenosyl-L-methionine = N(6)-methyladenosine(1618) in 23S rRNA + S-adenosyl-L-homocysteine + H(+). In terms of biological role, specifically methylates the adenine in position 1618 of 23S rRNA. The sequence is that of Ribosomal RNA large subunit methyltransferase F from Psychromonas ingrahamii (strain DSM 17664 / CCUG 51855 / 37).